The chain runs to 847 residues: Beta-galactosidase 1 (847 aa).

The N-terminal stretch at 1 to 32 (MGSKPNAMKNVVAMAAVSALFLLGFLVCSVSG) is a signal peptide. Glutamate 190 functions as the Proton donor in the catalytic mechanism. Glutamate 259 serves as the catalytic Nucleophile. Residue asparagine 469 is glycosylated (N-linked (GlcNAc...) asparagine). The 87-residue stretch at 761–847 (KPLHPKAHLQ…KKLAVEAVCA (87 aa)) folds into the SUEL-type lectin domain.

It belongs to the glycosyl hydrolase 35 family. Ubiquitous, at low levels.

Its subcellular location is the secreted. It is found in the extracellular space. The protein resides in the apoplast. The catalysed reaction is Hydrolysis of terminal non-reducing beta-D-galactose residues in beta-D-galactosides.. The chain is Beta-galactosidase 1 (BGAL1) from Arabidopsis thaliana (Mouse-ear cress).